The following is a 279-amino-acid chain: Early nodulin-like protein 18 (279 aa).

The N-terminal stretch at 1 to 24 is a signal peptide; it reads MAGAVATVSVGLAWLGLMAAAASA. Residues 25–133 enclose the Phytocyanin domain; that stretch reads TQFRVGGGRG…GEKLVVVVMA (109 aa). An intrachain disulfide couples Cys-82 to Cys-121. Residue Asn-83 is glycosylated (N-linked (GlcNAc...) asparagine). The tract at residues 138–256 is disordered; the sequence is RHAPPPSPPA…ANDRSGAAAA (119 aa). A compositionally biased stretch (pro residues) spans 140–168; that stretch reads APPPSPPAVPPPVAPVPMPSPASSPPSPA. Low complexity predominate over residues 169–185; that stretch reads PAAATPSLAPSPVATTP. Residues 186–199 show a composition bias toward pro residues; it reads SPSPSVSPMAPAPA. 2 stretches are compositionally biased toward low complexity: residues 212–226 and 234–256; these read AAMAPSPSTTPGGVA and TDGANATTPAAPAANDRSGAAAA. The N-linked (GlcNAc...) asparagine glycan is linked to Asn-238. Ser-251 carries the GPI-anchor amidated serine lipid modification. Positions 252-279 are cleaved as a propeptide — removed in mature form; the sequence is GAAAAAPVVAGVVVTSLGAYIGYAMLAI.

The protein belongs to the early nodulin-like (ENODL) family. Specifically expressed in reproductive tissues. Mainly observed in developing seeds and in mature leaves.

It localises to the cell membrane. May act as a carbohydrate transporter. Promotes tolerance to salt stress in a redox-dependent manner. In Oryza sativa subsp. japonica (Rice), this protein is Early nodulin-like protein 18.